A 679-amino-acid chain; its full sequence is UvrABC system protein B (679 aa).

In terms of domain architecture, Helicase ATP-binding spans 25 to 176 (YGVNQGKQYQ…NVRESLRELV (152 aa)). 38-45 (GATGTGKT) is a binding site for ATP. Residues 91–114 (YYDYYQPEAYVPVSDTYIAKTSSV) carry the Beta-hairpin motif. Residues 429-591 (QIDDLLDEIR…IIPKPAGKKP (163 aa)) form the Helicase C-terminal domain. A UVR domain is found at 639–674 (PEIIDKLEGKMNLAAEELDFEQAAKLRDRIRQLRKK).

It belongs to the UvrB family. In terms of assembly, forms a heterotetramer with UvrA during the search for lesions. Interacts with UvrC in an incision complex.

The protein localises to the cytoplasm. Functionally, the UvrABC repair system catalyzes the recognition and processing of DNA lesions. A damage recognition complex composed of 2 UvrA and 2 UvrB subunits scans DNA for abnormalities. Upon binding of the UvrA(2)B(2) complex to a putative damaged site, the DNA wraps around one UvrB monomer. DNA wrap is dependent on ATP binding by UvrB and probably causes local melting of the DNA helix, facilitating insertion of UvrB beta-hairpin between the DNA strands. Then UvrB probes one DNA strand for the presence of a lesion. If a lesion is found the UvrA subunits dissociate and the UvrB-DNA preincision complex is formed. This complex is subsequently bound by UvrC and the second UvrB is released. If no lesion is found, the DNA wraps around the other UvrB subunit that will check the other stand for damage. The chain is UvrABC system protein B from Prochlorococcus marinus (strain MIT 9211).